We begin with the raw amino-acid sequence, 35 residues long: Cupiennin-2a (35 aa).

Position 35 is a lysine amide (lysine 35).

In terms of tissue distribution, expressed by the venom gland.

Its subcellular location is the secreted. The chain is Cupiennin-2a from Cupiennius salei (American wandering spider).